A 681-amino-acid polypeptide reads, in one-letter code: Nucleolar GTP-binding protein 1 (681 aa).

An OBG-type G domain is found at 170 to 341; sequence RTLILCGFPN…LRDRACDELL (172 aa). Residues 176–183, 222–226, and 290–293 each bind GTP; these read GFPNVGKS, DTPGI, and NKVD.

Belongs to the TRAFAC class OBG-HflX-like GTPase superfamily. OBG GTPase family. NOG subfamily. In terms of tissue distribution, ubiquitously expressed.

The protein localises to the nucleus. The protein resides in the nucleolus. Involved in the biogenesis of the 60S ribosomal subunit. Has a role in regulating longevity, growth and brood size. May regulate fat storage via the insulin/IGF pathway. The sequence is that of Nucleolar GTP-binding protein 1 from Caenorhabditis elegans.